The primary structure comprises 395 residues: S-adenosylmethionine synthase (395 aa).

Histidine 14 is an ATP binding site. Aspartate 16 serves as a coordination point for Mg(2+). A K(+)-binding site is contributed by glutamate 42. Glutamate 55 and glutamine 98 together coordinate L-methionine. The tract at residues 98–108 (QSPDIALGVDK) is flexible loop. Residues 175 to 177 (DGK), 242 to 243 (RF), aspartate 251, 257 to 258 (RK), alanine 274, and lysine 278 contribute to the ATP site. Aspartate 251 is a binding site for L-methionine. Lysine 282 contacts L-methionine.

This sequence belongs to the AdoMet synthase family. In terms of assembly, homotetramer; dimer of dimers. Mg(2+) serves as cofactor. The cofactor is K(+).

It localises to the cytoplasm. The enzyme catalyses L-methionine + ATP + H2O = S-adenosyl-L-methionine + phosphate + diphosphate. It participates in amino-acid biosynthesis; S-adenosyl-L-methionine biosynthesis; S-adenosyl-L-methionine from L-methionine: step 1/1. In terms of biological role, catalyzes the formation of S-adenosylmethionine (AdoMet) from methionine and ATP. The overall synthetic reaction is composed of two sequential steps, AdoMet formation and the subsequent tripolyphosphate hydrolysis which occurs prior to release of AdoMet from the enzyme. The sequence is that of S-adenosylmethionine synthase from Thermosipho africanus (strain TCF52B).